A 361-amino-acid chain; its full sequence is Histidine biosynthesis bifunctional protein HisB (361 aa).

Residues 1–172 (MTQPTLFIDR…PKTTACKRPP (172 aa)) form a histidinol-phosphatase region. The active-site Nucleophile is D9. 2 residues coordinate Mg(2+): D9 and D11. The active-site Proton donor is the D11. Residues C92, H94, C100, and C102 each coordinate Zn(2+). D129 serves as a coordination point for Mg(2+). The segment at 173–361 (RYAEVVRTTK…NELPSSKGVL (189 aa)) is imidazoleglycerol-phosphate dehydratase.

This sequence in the N-terminal section; belongs to the histidinol-phosphatase family. In the C-terminal section; belongs to the imidazoleglycerol-phosphate dehydratase family. Requires Mg(2+) as cofactor. Zn(2+) serves as cofactor.

Its subcellular location is the cytoplasm. It carries out the reaction D-erythro-1-(imidazol-4-yl)glycerol 3-phosphate = 3-(imidazol-4-yl)-2-oxopropyl phosphate + H2O. It catalyses the reaction L-histidinol phosphate + H2O = L-histidinol + phosphate. It participates in amino-acid biosynthesis; L-histidine biosynthesis; L-histidine from 5-phospho-alpha-D-ribose 1-diphosphate: step 6/9. The protein operates within amino-acid biosynthesis; L-histidine biosynthesis; L-histidine from 5-phospho-alpha-D-ribose 1-diphosphate: step 8/9. This Actinobacillus pleuropneumoniae serotype 3 (strain JL03) protein is Histidine biosynthesis bifunctional protein HisB.